We begin with the raw amino-acid sequence, 236 residues long: Thioredoxin-like 2-2, chloroplastic (236 aa).

Residues 1 to 82 (MAGVVRLTTT…LRRPKSQVVR (82 aa)) constitute a chloroplast transit peptide. The Thioredoxin domain occupies 83-220 (VKVDENVAET…QLELGITLQT (138 aa)). Active-site nucleophile residues include cysteine 135 and cysteine 138. Cysteine 135 and cysteine 138 are disulfide-bonded.

The protein belongs to the thioredoxin family.

It is found in the plastid. It localises to the chloroplast. Functionally, thiol-disulfide oxidoreductase that may participate in various redox reactions. Possesses insulin disulfide bonds reducing activity. This chain is Thioredoxin-like 2-2, chloroplastic, found in Arabidopsis thaliana (Mouse-ear cress).